The sequence spans 274 residues: Putative pyruvate, phosphate dikinase regulatory protein (274 aa).

G149–T156 lines the ADP pocket.

This sequence belongs to the pyruvate, phosphate/water dikinase regulatory protein family. PDRP subfamily.

The catalysed reaction is N(tele)-phospho-L-histidyl/L-threonyl-[pyruvate, phosphate dikinase] + ADP = N(tele)-phospho-L-histidyl/O-phospho-L-threonyl-[pyruvate, phosphate dikinase] + AMP + H(+). The enzyme catalyses N(tele)-phospho-L-histidyl/O-phospho-L-threonyl-[pyruvate, phosphate dikinase] + phosphate + H(+) = N(tele)-phospho-L-histidyl/L-threonyl-[pyruvate, phosphate dikinase] + diphosphate. Functionally, bifunctional serine/threonine kinase and phosphorylase involved in the regulation of the pyruvate, phosphate dikinase (PPDK) by catalyzing its phosphorylation/dephosphorylation. This Rhizorhabdus wittichii (strain DSM 6014 / CCUG 31198 / JCM 15750 / NBRC 105917 / EY 4224 / RW1) (Sphingomonas wittichii) protein is Putative pyruvate, phosphate dikinase regulatory protein.